A 91-amino-acid chain; its full sequence is DNA-binding protein HRL53 (91 aa).

Residues 57–91 (ATKGRNPSTGAEVDIPARNVPKFTPGKGLKDAVNG) are disordered.

Belongs to the bacterial histone-like protein family.

Histone-like DNA-binding protein which is capable of wrapping DNA to stabilize it, and thus to prevent its denaturation under extreme environmental conditions. Binds to nod promoters and induces DNA binding. This chain is DNA-binding protein HRL53, found in Rhizobium leguminosarum.